Reading from the N-terminus, the 270-residue chain is S-adenosylmethionine decarboxylase proenzyme (270 aa).

Ser120 (schiff-base intermediate with substrate; via pyruvic acid) is an active-site residue. Ser120 is subject to Pyruvic acid (Ser); by autocatalysis. Catalysis depends on His125, which acts as the Proton acceptor; for processing activity. Cys148 functions as the Proton donor; for catalytic activity in the catalytic mechanism.

This sequence belongs to the prokaryotic AdoMetDC family. Type 2 subfamily. In terms of assembly, heterooctamer of four alpha and four beta chains arranged as a tetramer of alpha/beta heterodimers. Pyruvate is required as a cofactor. Post-translationally, is synthesized initially as an inactive proenzyme. Formation of the active enzyme involves a self-maturation process in which the active site pyruvoyl group is generated from an internal serine residue via an autocatalytic post-translational modification. Two non-identical subunits are generated from the proenzyme in this reaction, and the pyruvate is formed at the N-terminus of the alpha chain, which is derived from the carboxyl end of the proenzyme. The post-translation cleavage follows an unusual pathway, termed non-hydrolytic serinolysis, in which the side chain hydroxyl group of the serine supplies its oxygen atom to form the C-terminus of the beta chain, while the remainder of the serine residue undergoes an oxidative deamination to produce ammonia and the pyruvoyl group blocking the N-terminus of the alpha chain.

It catalyses the reaction S-adenosyl-L-methionine + H(+) = S-adenosyl 3-(methylsulfanyl)propylamine + CO2. It participates in amine and polyamine biosynthesis; S-adenosylmethioninamine biosynthesis; S-adenosylmethioninamine from S-adenosyl-L-methionine: step 1/1. In terms of biological role, catalyzes the decarboxylation of S-adenosylmethionine to S-adenosylmethioninamine (dcAdoMet), the propylamine donor required for the synthesis of the polyamines spermine and spermidine from the diamine putrescine. The chain is S-adenosylmethionine decarboxylase proenzyme from Alkaliphilus oremlandii (strain OhILAs) (Clostridium oremlandii (strain OhILAs)).